The primary structure comprises 153 residues: Large ribosomal subunit protein uL15 (153 aa).

The protein belongs to the universal ribosomal protein uL15 family. In terms of assembly, part of the 50S ribosomal subunit.

Binds to the 23S rRNA. The sequence is that of Large ribosomal subunit protein uL15 from Pelagibacter ubique (strain HTCC1062).